The primary structure comprises 193 residues: Bcl-2-binding component 3 (193 aa).

Disordered regions lie at residues 1-32 (MARA…RLMP) and 71-131 (ALGG…VEEE). Ser-10 carries the phosphoserine modification. The BH3 motif lies at 137–151 (IGAQLRRMADDLNAQ).

This sequence belongs to the Bcl-2 family. Interacts with MCL1 and BCL2A1. Interacts (via BH3 domain) with BCL2 and BCL2L1/BCL-XL. Interacts (via BH3 domain) with NOL3/ARC (via CARD domain); this interaction prevents BBC3 association with BCL2 and results in CASP8 activation.

The protein resides in the mitochondrion. Essential mediator of p53/TP53-dependent and p53/TP53-independent apoptosis. Promotes partial unfolding of BCL2L1 and dissociation of BCL2L1 from p53/TP53, releasing the bound p53/TP53 to induce apoptosis. Regulates ER stress-induced neuronal apoptosis. The sequence is that of Bcl-2-binding component 3 (Bbc3) from Rattus norvegicus (Rat).